A 528-amino-acid polypeptide reads, in one-letter code: Tyrosine-protein kinase transforming protein Yes (528 aa).

Positions 1–12 (DKGPAMKYRTDN) are enriched in basic and acidic residues. Residues 1–35 (DKGPAMKYRTDNTPEPISSHVSHYGSDSSQATQSP) are disordered. The segment covering 18–29 (SSHVSHYGSDSS) has biased composition (low complexity). An SH3 domain is found at 81–142 (GGGTVFVALY…PSNYVAPADS (62 aa)). The SH2 domain occupies 148–245 (WYFGKMGRKD…GLCHKLTTVC (98 aa)). The 254-residue stretch at 267-520 (LRLEVKLGQG…YIQSFLEDYF (254 aa)) folds into the Protein kinase domain. Residues 273 to 281 (LGQGCFGEV) and K295 each bind ATP. D386 serves as the catalytic Proton acceptor. Residue Y416 is modified to Phosphotyrosine; by autocatalysis.

It belongs to the protein kinase superfamily. Tyr protein kinase family. SRC subfamily.

It carries out the reaction L-tyrosyl-[protein] + ATP = O-phospho-L-tyrosyl-[protein] + ADP + H(+). The protein is Tyrosine-protein kinase transforming protein Yes (V-YES) of Galliformes (Y73SV).